Reading from the N-terminus, the 379-residue chain is Queuine tRNA-ribosyltransferase (379 aa).

The Proton acceptor role is filled by Asp94. Substrate is bound by residues 94–98 (DSGGF), Asp148, Gln191, and Gly218. The segment at 249–255 (GVGSPDA) is RNA binding. The active-site Nucleophile is Asp268. Positions 273–277 (TRIAR) are RNA binding; important for wobble base 34 recognition. Zn(2+) is bound by residues Cys306, Cys308, Cys311, and His337.

It belongs to the queuine tRNA-ribosyltransferase family. As to quaternary structure, homodimer. Within each dimer, one monomer is responsible for RNA recognition and catalysis, while the other monomer binds to the replacement base PreQ1. Zn(2+) is required as a cofactor.

The catalysed reaction is 7-aminomethyl-7-carbaguanine + guanosine(34) in tRNA = 7-aminomethyl-7-carbaguanosine(34) in tRNA + guanine. It participates in tRNA modification; tRNA-queuosine biosynthesis. In terms of biological role, catalyzes the base-exchange of a guanine (G) residue with the queuine precursor 7-aminomethyl-7-deazaguanine (PreQ1) at position 34 (anticodon wobble position) in tRNAs with GU(N) anticodons (tRNA-Asp, -Asn, -His and -Tyr). Catalysis occurs through a double-displacement mechanism. The nucleophile active site attacks the C1' of nucleotide 34 to detach the guanine base from the RNA, forming a covalent enzyme-RNA intermediate. The proton acceptor active site deprotonates the incoming PreQ1, allowing a nucleophilic attack on the C1' of the ribose to form the product. After dissociation, two additional enzymatic reactions on the tRNA convert PreQ1 to queuine (Q), resulting in the hypermodified nucleoside queuosine (7-(((4,5-cis-dihydroxy-2-cyclopenten-1-yl)amino)methyl)-7-deazaguanosine). The polypeptide is Queuine tRNA-ribosyltransferase (Macrococcus caseolyticus (strain JCSC5402) (Macrococcoides caseolyticum)).